A 203-amino-acid chain; its full sequence is Probable NADPH:quinone oxidoreductase 2 (203 aa).

Belongs to the SsuE family. In terms of assembly, homotetramer. FMN is required as a cofactor.

It catalyses the reaction a quinone + NADH + H(+) = a quinol + NAD(+). It carries out the reaction a quinone + NADPH + H(+) = a quinol + NADP(+). Its function is as follows. The enzyme apparently serves as a quinone reductase in connection with conjugation reactions of hydroquinones involved in detoxification pathways. The chain is Probable NADPH:quinone oxidoreductase 2 from Oryza sativa subsp. japonica (Rice).